We begin with the raw amino-acid sequence, 798 residues long: Acetyl-CoA decarbonylase/synthase complex subunit alpha 2 (798 aa).

6 residues coordinate [4Fe-4S] cluster: cysteine 65, cysteine 68, cysteine 69, cysteine 71, cysteine 76, and cysteine 86. Position 109 (histidine 109) interacts with CO. Residues histidine 246, cysteine 274, and cysteine 313 each contribute to the [Ni-4Fe-4S] cluster site. 2 4Fe-4S ferredoxin-type domains span residues 395–424 (EEQF…IGEA) and 434–463 (SKLE…IDMY). Residues cysteine 405, cysteine 408, cysteine 411, cysteine 415, cysteine 443, cysteine 446, cysteine 449, and cysteine 453 each coordinate [4Fe-4S] cluster. [Ni-4Fe-4S] cluster-binding residues include cysteine 511, cysteine 540, and cysteine 575.

Belongs to the Ni-containing carbon monoxide dehydrogenase family. Heterotetramer of two alpha and two epsilon subunits. The ACDS complex is made up of alpha, epsilon, beta, gamma and delta subunits with a probable stoichiometry of (alpha(2)epsilon(2))(4)-beta(8)-(gamma(1)delta(1))(8). The cofactor is [4Fe-4S] cluster. It depends on [Ni-4Fe-4S] cluster as a cofactor.

The catalysed reaction is CO + 2 oxidized [2Fe-2S]-[ferredoxin] + H2O = 2 reduced [2Fe-2S]-[ferredoxin] + CO2 + 2 H(+). Functionally, part of the ACDS complex that catalyzes the reversible cleavage of acetyl-CoA, allowing autotrophic growth from CO(2). The alpha-epsilon subcomponent functions as a carbon monoxide dehydrogenase. The sequence is that of Acetyl-CoA decarbonylase/synthase complex subunit alpha 2 from Archaeoglobus fulgidus (strain ATCC 49558 / DSM 4304 / JCM 9628 / NBRC 100126 / VC-16).